The primary structure comprises 410 residues: Arginine deiminase (410 aa).

Residue Cys-400 is the Amidino-cysteine intermediate of the active site.

Belongs to the arginine deiminase family.

Its subcellular location is the cytoplasm. It carries out the reaction L-arginine + H2O = L-citrulline + NH4(+). The protein operates within amino-acid degradation; L-arginine degradation via ADI pathway; carbamoyl phosphate from L-arginine: step 1/2. This chain is Arginine deiminase, found in Bacillus cereus (strain ATCC 10987 / NRS 248).